The chain runs to 458 residues: Probable asparagine--tRNA ligase, cytoplasmic (458 aa).

Belongs to the class-II aminoacyl-tRNA synthetase family.

Its subcellular location is the cytoplasm. It catalyses the reaction tRNA(Asn) + L-asparagine + ATP = L-asparaginyl-tRNA(Asn) + AMP + diphosphate + H(+). This chain is Probable asparagine--tRNA ligase, cytoplasmic, found in Enterocytozoon bieneusi (strain H348) (Microsporidian parasite).